An 84-amino-acid polypeptide reads, in one-letter code: Delta-stichotoxin-Shd3a (84 aa).

Positions 1-19 are cleaved as a signal peptide; the sequence is MAYLKIVLVALMLVLGVSA. A propeptide spanning residues 20–33 is cleaved from the precursor; that stretch reads MRLSDQEDQDVSVV. 3 cysteine pairs are disulfide-bonded: Cys-38–Cys-78, Cys-40–Cys-68, and Cys-61–Cys-79. Residue Lys-83 is modified to Lysine amide.

The protein belongs to the sea anemone sodium channel inhibitory toxin family. Type II subfamily.

Its subcellular location is the secreted. It localises to the nematocyst. Binds specifically to voltage-gated sodium channels (Nav), thereby delaying their inactivation during signal transduction. The chain is Delta-stichotoxin-Shd3a from Stichodactyla haddoni (Saddle carpet anemone).